We begin with the raw amino-acid sequence, 417 residues long: Serine protease hepsin (417 aa).

The Cytoplasmic segment spans residues 1–23; the sequence is MAQKEGGRTVPCCSRPKVAALTA. Residues 24–44 form a helical; Signal-anchor for type II membrane protein membrane-spanning segment; the sequence is GTLLLLTAIGAASWAIVAVLL. Residues 45-417 lie on the Extracellular side of the membrane; that stretch reads RSDQEPLYPV…SEASGMVTQL (373 aa). Residues 54–151 form the SRCR domain; it reads VQVSSADARL…RGRFLAAICQ (98 aa). 8 disulfide bridges follow: C77–C140, C90–C150, C119–C138, C153–C277, C188–C204, C291–C359, C322–C338, and C349–C381. N112 carries an N-linked (GlcNAc...) asparagine glycan. In terms of domain architecture, Peptidase S1 spans 163 to 405; that stretch reads IVGGRDTSLG…FREWIFQAIK (243 aa). Active-site charge relay system residues include H203 and D257. S353 serves as the catalytic Charge relay system.

It belongs to the peptidase S1 family. In terms of tissue distribution, detected in liver and kidney.

The protein resides in the cell membrane. Its subcellular location is the apical cell membrane. It carries out the reaction Cleavage after basic amino-acid residues, with Arg strongly preferred to Lys.. Functionally, serine protease that cleaves extracellular substrates, and contributes to the proteolytic processing of growth factors, such as HGF and MST1/HGFL. Plays a role in cell growth and maintenance of cell morphology. Plays a role in the proteolytic processing of ACE2. Mediates the proteolytic cleavage of urinary UMOD that is required for UMOD polymerization. The sequence is that of Serine protease hepsin (HPN) from Homo sapiens (Human).